The following is a 463-amino-acid chain: Glucagon-like peptide 1 receptor (463 aa).

An N-terminal signal peptide occupies residues 1–21 (MAVTPSLLRLALLLLGAVGRA). Residues 22–139 (GPRPQGATVS…KQGERNSPEE (118 aa)) lie on the Extracellular side of the membrane. Disulfide bonds link Cys46–Cys71, Cys62–Cys104, and Cys85–Cys126. Asn63, Asn82, and Asn115 each carry an N-linked (GlcNAc...) asparagine glycan. Residues 140–164 (QLLSLYIIYTVGYALSFSALVIASA) form a helical membrane-spanning segment. Residues 165 to 175 (ILVSFRHLHCT) lie on the Cytoplasmic side of the membrane. The helical transmembrane segment at 176–201 (RNYIHLNLFASFILRALSVFIKDAAL) threads the bilayer. At 202–227 (KWMYSTAAQQHQWDGLLSYQDSLGCR) the chain is on the extracellular side. The cysteines at positions 226 and 296 are disulfide-linked. A helical membrane pass occupies residues 228-251 (LVFLLMQYCVAANYYWLLVEGVYL). The Cytoplasmic portion of the chain corresponds to 252-265 (YTLLAFSVFSEQRI). The helical transmembrane segment at 266–290 (FKLYLSIGWGVPLLFVIPWGIVKYL) threads the bilayer. Topologically, residues 291–305 (YEDEGCWTRNSNMNY) are extracellular. Residues 306-328 (WLIIRLPILFAIGVNFLVFIRVI) form a helical membrane-spanning segment. Over 329–348 (CIVIAKLKANLMCKTDIKCR) the chain is Cytoplasmic. The residue at position 341 (Cys341) is an ADP-ribosylcysteine. Arg348 is subject to ADP-ribosylarginine. Residues 349-370 (LAKSTLTLIPLLGTHEVIFAFV) traverse the membrane as a helical segment. Residues 352–355 (STLT) form an important for allosteric inhibitor binding region. Residues 371 to 383 (MDEHARGTLRFVK) are Extracellular-facing. Residues 384–404 (LFTELSFTSFQGFMVAVLYCF) traverse the membrane as a helical segment. At 405–463 (VNNEVQMEFRKSWERWRLERLNIQRDSSMKPLKCPTSSVSSGATVGSSVYAATCQNSCS) the chain is on the cytoplasmic side.

The protein belongs to the G-protein coupled receptor 2 family. In terms of assembly, may form homodimers and heterodimers with GIPR. Post-translationally, N-glycosylation enhances cell surface expression and lengthens receptor half-life by preventing degradation in the ER. In terms of tissue distribution, pancreatic islets, stomach, lung, rat insulinoma cell line.

Its subcellular location is the cell membrane. Functionally, G-protein coupled receptor for glucagon-like peptide 1 (GLP-1). Ligand binding triggers activation of a signaling cascade that leads to the activation of adenylyl cyclase and increased intracellular cAMP levels. Plays a role in regulating insulin secretion in response to GLP-1. This is Glucagon-like peptide 1 receptor (Glp1r) from Rattus norvegicus (Rat).